The primary structure comprises 308 residues: Thymidylate synthase (308 aa).

DUMP is bound by residues arginine 26 and 170–171 (RR). Cysteine 190 functions as the Nucleophile in the catalytic mechanism. Residues 210–213 (RSCD), asparagine 221, and 251–253 (HVY) each bind dUMP. Position 213 (aspartate 213) interacts with (6R)-5,10-methylene-5,6,7,8-tetrahydrofolate. Alanine 307 is a (6R)-5,10-methylene-5,6,7,8-tetrahydrofolate binding site.

The protein belongs to the thymidylate synthase family. Bacterial-type ThyA subfamily. Homodimer.

The protein resides in the cytoplasm. The catalysed reaction is dUMP + (6R)-5,10-methylene-5,6,7,8-tetrahydrofolate = 7,8-dihydrofolate + dTMP. The protein operates within pyrimidine metabolism; dTTP biosynthesis. Its function is as follows. Catalyzes the reductive methylation of 2'-deoxyuridine-5'-monophosphate (dUMP) to 2'-deoxythymidine-5'-monophosphate (dTMP) while utilizing 5,10-methylenetetrahydrofolate (mTHF) as the methyl donor and reductant in the reaction, yielding dihydrofolate (DHF) as a by-product. This enzymatic reaction provides an intracellular de novo source of dTMP, an essential precursor for DNA biosynthesis. The polypeptide is Thymidylate synthase (Rhizorhabdus wittichii (strain DSM 6014 / CCUG 31198 / JCM 15750 / NBRC 105917 / EY 4224 / RW1) (Sphingomonas wittichii)).